Here is a 352-residue protein sequence, read N- to C-terminus: Nicotinate-nucleotide--dimethylbenzimidazole phosphoribosyltransferase (352 aa).

Glutamate 318 acts as the Proton acceptor in catalysis.

It belongs to the CobT family.

The enzyme catalyses 5,6-dimethylbenzimidazole + nicotinate beta-D-ribonucleotide = alpha-ribazole 5'-phosphate + nicotinate + H(+). It participates in nucleoside biosynthesis; alpha-ribazole biosynthesis; alpha-ribazole from 5,6-dimethylbenzimidazole: step 1/2. Catalyzes the synthesis of alpha-ribazole-5'-phosphate from nicotinate mononucleotide (NAMN) and 5,6-dimethylbenzimidazole (DMB). The protein is Nicotinate-nucleotide--dimethylbenzimidazole phosphoribosyltransferase of Geobacter sulfurreducens (strain ATCC 51573 / DSM 12127 / PCA).